The chain runs to 484 residues: Aspartyl/glutamyl-tRNA(Asn/Gln) amidotransferase subunit B (484 aa).

Belongs to the GatB/GatE family. GatB subfamily. As to quaternary structure, heterotrimer of A, B and C subunits.

It catalyses the reaction L-glutamyl-tRNA(Gln) + L-glutamine + ATP + H2O = L-glutaminyl-tRNA(Gln) + L-glutamate + ADP + phosphate + H(+). It carries out the reaction L-aspartyl-tRNA(Asn) + L-glutamine + ATP + H2O = L-asparaginyl-tRNA(Asn) + L-glutamate + ADP + phosphate + 2 H(+). Functionally, allows the formation of correctly charged Asn-tRNA(Asn) or Gln-tRNA(Gln) through the transamidation of misacylated Asp-tRNA(Asn) or Glu-tRNA(Gln) in organisms which lack either or both of asparaginyl-tRNA or glutaminyl-tRNA synthetases. The reaction takes place in the presence of glutamine and ATP through an activated phospho-Asp-tRNA(Asn) or phospho-Glu-tRNA(Gln). This Bordetella parapertussis (strain 12822 / ATCC BAA-587 / NCTC 13253) protein is Aspartyl/glutamyl-tRNA(Asn/Gln) amidotransferase subunit B.